A 392-amino-acid chain; its full sequence is Galactokinase (392 aa).

40–43 provides a ligand contact to substrate; sequence EHID. ATP is bound by residues Ser74 and 128-134; that span reads GSGLSSS. Mg(2+) contacts are provided by Ser134 and Glu167. Asp179 serves as the catalytic Proton acceptor. Tyr229 is a binding site for substrate.

This sequence belongs to the GHMP kinase family. GalK subfamily.

The protein resides in the cytoplasm. The enzyme catalyses alpha-D-galactose + ATP = alpha-D-galactose 1-phosphate + ADP + H(+). Its pathway is carbohydrate metabolism; galactose metabolism. Its function is as follows. Catalyzes the transfer of the gamma-phosphate of ATP to D-galactose to form alpha-D-galactose-1-phosphate (Gal-1-P). This Clostridium tetani (strain Massachusetts / E88) protein is Galactokinase.